Here is a 343-residue protein sequence, read N- to C-terminus: Multidrug resistance protein MdtN (343 aa).

Over 1-12 the chain is Cytoplasmic; that stretch reads MESTPKKAPRSK. A helical; Signal-anchor for type II membrane protein transmembrane segment spans residues 13-33; that stretch reads FPALLVVALALVALVFVIWRV. Over 34–343 the chain is Periplasmic; sequence DSAPSTNDAY…ASAVANLEPQ (310 aa).

The protein belongs to the membrane fusion protein (MFP) (TC 8.A.1) family. In terms of assembly, could be part of a tripartite efflux system composed of MdtN, MdtO and MdtP.

It is found in the cell inner membrane. Functionally, could be involved in resistance to puromycin, acriflavine and tetraphenylarsonium chloride. This Escherichia coli (strain K12) protein is Multidrug resistance protein MdtN (mdtN).